A 164-amino-acid polypeptide reads, in one-letter code: Nucleotide-binding protein EF_1165 (164 aa).

It belongs to the YajQ family.

Its function is as follows. Nucleotide-binding protein. This is Nucleotide-binding protein EF_1165 from Enterococcus faecalis (strain ATCC 700802 / V583).